The primary structure comprises 1891 residues: Endoribonuclease Dicer-L (1891 aa).

In terms of domain architecture, Helicase ATP-binding spans 41 to 217 (LLEAALDHNT…DLEEKIQKLE (177 aa)). 54 to 61 (LNSGSGKT) is a binding site for ATP. A DECH box motif is present at residues 165-168 (DECH). A Helicase C-terminal domain is found at 425–594 (SFPSPFTNIL…SIDCGNTESE (170 aa)). In terms of domain architecture, Dicer dsRNA-binding fold spans 622–714 (AIGHINRYCA…MPVGKETVKY (93 aa)). Residues 887 to 1034 (KFVEDIEKSE…LVPELCAIHP (148 aa)) enclose the PAZ domain. RNase III domains follow at residues 1248 to 1379 (TSDM…ETSG) and 1635 to 1793 (FENF…MDSG). E1292, D1370, E1373, E1674, D1779, and E1782 together coordinate Mg(2+). Positions 1818–1883 (VPRSPVRELL…ARRALRSLKA (66 aa)) constitute a DRBM domain.

The protein belongs to the helicase family. Dicer subfamily. As to quaternary structure, component of the RISC loading complex (RLC), or micro-RNA (miRNA) loading complex (miRLC), which is composed of dicer1, ago2 and tarbp2; dicer1 and tarbp2 are required to process precursor miRNAs (pre-miRNAs) to mature miRNAs and then load them onto ago2. Note that the trimeric RLC/miRLC is also referred to as RISC. Requires Mg(2+) as cofactor. The cofactor is Mn(2+).

The protein localises to the cytoplasm. It carries out the reaction Endonucleolytic cleavage to 5'-phosphomonoester.. In terms of biological role, double-stranded RNA (dsRNA) endoribonuclease playing a central role in short dsRNA-mediated post-transcriptional gene silencing. Cleaves naturally occurring long dsRNAs and short hairpin pre-microRNAs (miRNA) into fragments of 21 to 23 nucleotides with 3' overhang of two nucleotides, producing respectively short interfering RNAs (siRNA) and mature microRNAs. SiRNAs and miRNAs serve as guide to direct the RNA-induced silencing complex (RISC) to complementary RNAs to degrade them or prevent their translation. Gene silencing mediated by siRNAs, also called RNA interference, controls the elimination of transcripts from mobile and repetitive DNA elements of the genome but also the degradation of exogenous RNA of viral origin for instance. The miRNA pathway on the other side is a mean to specifically regulate the expression of target genes. During embryonic development, at the left-right organizer, post-transcriptionally regulates the expression of dand5 in flow sensor cells. In post-flow stages, acts along with Bicc1 to repress dand5 mRNA translation and decay. Decreased Dand5 expression lifts repression of Nodal and defines leftness by induction of the lateral plate mesoderm Nodal signaling cascade. This chain is Endoribonuclease Dicer-L (dicer1.L), found in Xenopus laevis (African clawed frog).